The following is an 854-amino-acid chain: SH2 domain-containing protein 3C (854 aa).

Ser-22 is subject to Phosphoserine. Over residues 34 to 43 (RSSASASIRS) the composition is skewed to low complexity. Residues 34–129 (RSSASASIRS…AKEAGEGTEA (96 aa)) form a disordered region. Basic and acidic residues predominate over residues 99 to 124 (EVSRESHLVSRRLPEPPDLEAAKEAG). The region spanning 215–314 (WYHGRIPREV…QSGAIIYCPV (100 aa)) is the SH2 domain. Residues Tyr-273 and Tyr-278 each carry the phosphotyrosine modification. Disordered stretches follow at residues 330 to 384 (SQGS…PRDS), 398 to 417 (LHSP…YSTV), and 422 to 520 (APSA…ERQK). Low complexity predominate over residues 333 to 347 (SSKTASPASPSGSKG). Phosphoserine is present on Ser-354. Low complexity-rich tracts occupy residues 400 to 415 (SPLS…PAYS), 422 to 436 (APSA…PASP), and 474 to 485 (SPSPSLSSYSDP). Ser-435 bears the Phosphoserine mark. Positions 508 to 520 (TPRKARGSGERQK) are enriched in basic and acidic residues. Residues 580–848 (DARTLARHVT…TALSHKLEPA (269 aa)) form the Ras-GEF domain. Phosphotyrosine is present on Tyr-787.

In terms of assembly, component of a complex comprised of SH2D3C, BCAR1/CAS, and CRK. Within the complex, interacts with CRK and (via C-terminus) with BCAR1/CAS (via C-terminus). Interacts with NEDD9/HEF1. Interacts with EPHB2. Interacts with NEDD9/HEF1. Interacts with BCAR1/CAS. Interacts with PTK2B. As to quaternary structure, interacts (via C-terminus) with BCAR1/CAS (via C-terminus). Interacts with IGF1. Phosphorylated by MAPK/ERK upon T-cell receptor stimulation in T-cells. In terms of tissue distribution, expressed in the olfactory bulb and olfactory sensory neurons (at protein level). Expressed in B cells (at protein level). Expressed in T lymphocytes. Expressed in hematopoietic cells from spleen, lymph node and thymus (at protein level). Expressed weakly in the lung (at protein level). As to expression, expressed in the brain, lung, kidney, and weakly expressed in the liver and lung (at protein level).

Its subcellular location is the cytoplasm. The protein resides in the cell membrane. It is found in the cell projection. The protein localises to the axon. It localises to the ruffle membrane. Its function is as follows. Acts as an adapter protein that mediates cell signaling pathways involved in cellular functions such as cell adhesion and migration, tissue organization, and the regulation of the immune response. Plays a role in integrin-mediated cell adhesion through BCAR1-CRK-RAPGEF1 signaling and activation of the small GTPase RAP1. Promotes cell migration and invasion through the extracellular matrix. Required for marginal zone B-cell development and thymus-independent type 2 immune responses. Mediates migration and adhesion of B cells in the splenic marginal zone via promoting hyperphosphorylation of NEDD9/CASL. Plays a role in CXCL13-induced chemotaxis of B-cells. Plays a role in the migration of olfactory sensory neurons (OSNs) into the forebrain and the innervation of the olfactory bulb by the OSN axons during development. Required for the efficient tyrosine phosphorylation of BCAR1 in OSN axons. In terms of biological role, important regulator of chemokine-induced, integrin-mediated T lymphocyte adhesion and migration, acting upstream of RAP1. Required for tissue-specific adhesion of T lymphocytes to peripheral tissues. Required for basal and CXCL2 stimulated serine-threonine phosphorylation of NEDD9. May be involved in the regulation of T-cell receptor-mediated IL2 production through the activation of the JNK pathway in T-cells. May be involved in the BCAR1/CAS-mediated JNK activation pathway. The chain is SH2 domain-containing protein 3C (Sh2d3c) from Mus musculus (Mouse).